A 622-amino-acid chain; its full sequence is Kinesin light chain 2 (622 aa).

The stretch at 78-143 (ILALSSHLGA…KQHLLFMSQI (66 aa)) forms a coiled coil. Over residues 145–164 (KLDEDASPNEEKGDVPKDTL) the composition is skewed to basic and acidic residues. The segment at 145–191 (KLDEDASPNEEKGDVPKDTLDDLFPNEDEQSPAPSPGGGDVSGQHGG) is disordered. Phosphoserine occurs at positions 151, 175, and 179. Gly residues predominate over residues 180–190 (PGGGDVSGQHG). TPR repeat units follow at residues 198-231 (LRTL…LEKT), 240-273 (ATML…REKT), 282-315 (AATL…REKV), 324-357 (AKQL…YATR), and 366-399 (AKTK…AHEK). Residue serine 445 is modified to Phosphoserine. One copy of the TPR 6 repeat lies at 449–482 (NTTLRSLGALYRRQGKLEAAHTLEDCASRNRKQG). Disordered regions lie at residues 476 to 548 (SRNR…SFGK) and 563 to 622 (KLQG…SLVG). Over residues 493-509 (ELLKDGSGRRGDRRSSR) the composition is skewed to basic and acidic residues. Phosphoserine is present on residues serine 508 and serine 521. The span at 538–547 (GSLRRSGSFG) shows a compositional bias: low complexity. Phosphoserine occurs at positions 581, 582, 589, 608, 610, and 615. The span at 601 to 622 (LSDSRTLSSSSMDLSRRSSLVG) shows a compositional bias: low complexity.

This sequence belongs to the kinesin light chain family. Oligomeric complex composed of two heavy chains and two light chains. Interacts (via TPR repeats) with PLEKHM2.

It localises to the cytoplasm. The protein localises to the cytoskeleton. The protein resides in the lysosome membrane. Functionally, kinesin is a microtubule-associated force-producing protein that plays a role in organelle transport. The light chain functions in coupling of cargo to the heavy chain or in the modulation of its ATPase activity. Through binding with PLEKHM2 and ARL8B, recruits kinesin-1 to lysosomes and hence direct lysosomes movement toward microtubule plus ends. In Homo sapiens (Human), this protein is Kinesin light chain 2.